A 23-amino-acid polypeptide reads, in one-letter code: Aurein-4.4 (23 aa).

This sequence belongs to the frog skin active peptide (FSAP) family. Aurein subfamily. In terms of tissue distribution, expressed by the skin dorsal glands.

It localises to the secreted. Functionally, has no antimicrobial or anticancer activity. This chain is Aurein-4.4, found in Ranoidea aurea (Green and golden bell frog).